A 366-amino-acid chain; its full sequence is MELRDLSDHVEYRAGRGIEEVARELGRDPSEFVKLSSNENPHGPSPKATIAIREAATGVHRYPKAVHADLTGALADRWDVGDDQVWVANGGDGALDYLARATLDPGDSVLVPSPGFTYYGMSARFHHGNVAEYDVAEGADGFEMTADAVVDAYDGERVVYLTTPHNPTGARFTLDEIVAVADRTDEDTLVLVDEAYGEFTETPSAVTLFDGQPAGGHAPRDDIAVLRTFSKAYGLAGIRLGYAVVPDSWADAYARVQTPFAASVIACQAGVAALDDDDHVEATTDSVAWGRDYIHDELAARTYESHGNFVLANVGDAGRVAEAAKREGVLVRDCTSFGLPEHVRITIGTRSETERAVAVLNEVCDT.

Lysine 231 carries the N6-(pyridoxal phosphate)lysine modification.

It belongs to the class-II pyridoxal-phosphate-dependent aminotransferase family. Histidinol-phosphate aminotransferase subfamily. Pyridoxal 5'-phosphate serves as cofactor.

It carries out the reaction L-histidinol phosphate + 2-oxoglutarate = 3-(imidazol-4-yl)-2-oxopropyl phosphate + L-glutamate. It functions in the pathway amino-acid biosynthesis; L-histidine biosynthesis; L-histidine from 5-phospho-alpha-D-ribose 1-diphosphate: step 7/9. The polypeptide is Histidinol-phosphate aminotransferase (Halobacterium salinarum (strain ATCC 29341 / DSM 671 / R1)).